The sequence spans 61 residues: Photosystem II reaction center X protein (61 aa).

Residues 26–46 (IGSFIAAALLIVVPATAFLIF) form a helical membrane-spanning segment.

It belongs to the PsbX family. Type 2 subfamily. PSII consists of a core antenna complex that captures photons, and an electron transfer chain that converts photonic excitation into a charge separation. PSII forms dimeric complexes.

Its subcellular location is the cellular thylakoid membrane. Functionally, involved in the binding and/or turnover of quinones at the Q(B) site of Photosystem II. The chain is Photosystem II reaction center X protein from Prochlorococcus marinus (strain AS9601).